Here is a 411-residue protein sequence, read N- to C-terminus: UPF0261 protein SACE_5696 (411 aa).

This sequence belongs to the UPF0261 family.

This is UPF0261 protein SACE_5696 from Saccharopolyspora erythraea (strain ATCC 11635 / DSM 40517 / JCM 4748 / NBRC 13426 / NCIMB 8594 / NRRL 2338).